The following is a 189-amino-acid chain: Large ribosomal subunit protein uL6 (189 aa).

This sequence belongs to the universal ribosomal protein uL6 family. In terms of assembly, part of the 50S ribosomal subunit.

Functionally, this protein binds to the 23S rRNA, and is important in its secondary structure. It is located near the subunit interface in the base of the L7/L12 stalk, and near the tRNA binding site of the peptidyltransferase center. The chain is Large ribosomal subunit protein uL6 from Bacteroides fragilis (strain ATCC 25285 / DSM 2151 / CCUG 4856 / JCM 11019 / LMG 10263 / NCTC 9343 / Onslow / VPI 2553 / EN-2).